The sequence spans 111 residues: Ig kappa chain V-III region PC 7940 (111 aa).

The segment at Asp-1 to Cys-23 is framework-1. Residues Cys-23 and Cys-92 are joined by a disulfide bond. The segment at Arg-24–His-38 is complementarity-determining-1. Residues Trp-39 to Tyr-53 are framework-2. The interval Leu-54–Ser-60 is complementarity-determining-2. Positions Gly-61–Cys-92 are framework-3. The segment at Gln-93 to Thr-101 is complementarity-determining-3. The tract at residues Phe-102–Lys-111 is framework-4.

The sequence is that of Ig kappa chain V-III region PC 7940 from Mus musculus (Mouse).